The sequence spans 320 residues: o-succinylbenzoate synthase (320 aa).

Lysine 133 acts as the Proton donor in catalysis. 3 residues coordinate Mg(2+): aspartate 161, glutamate 190, and aspartate 213. The active-site Proton acceptor is lysine 235.

It belongs to the mandelate racemase/muconate lactonizing enzyme family. MenC type 1 subfamily. A divalent metal cation serves as cofactor.

It carries out the reaction (1R,6R)-6-hydroxy-2-succinyl-cyclohexa-2,4-diene-1-carboxylate = 2-succinylbenzoate + H2O. The protein operates within quinol/quinone metabolism; 1,4-dihydroxy-2-naphthoate biosynthesis; 1,4-dihydroxy-2-naphthoate from chorismate: step 4/7. It functions in the pathway quinol/quinone metabolism; menaquinone biosynthesis. In terms of biological role, converts 2-succinyl-6-hydroxy-2,4-cyclohexadiene-1-carboxylate (SHCHC) to 2-succinylbenzoate (OSB). The sequence is that of o-succinylbenzoate synthase from Escherichia coli O6:H1 (strain CFT073 / ATCC 700928 / UPEC).